Consider the following 310-residue polypeptide: Glutaminase (310 aa).

S66, N117, E161, N168, Y192, Y244, and V262 together coordinate substrate.

This sequence belongs to the glutaminase family. Homotetramer.

The enzyme catalyses L-glutamine + H2O = L-glutamate + NH4(+). The protein is Glutaminase of Shigella boydii serotype 4 (strain Sb227).